Reading from the N-terminus, the 1117-residue chain is Protein ECM21 (1117 aa).

2 disordered regions span residues Met-1–Ser-48 and Val-63–Ile-155. The span at Lys-11 to Pro-34 shows a compositional bias: polar residues. A Phosphoserine modification is found at Ser-18. The span at Asn-70–Asn-81 shows a compositional bias: low complexity. Ser-115 carries the post-translational modification Phosphoserine. Residues Ser-117–Asp-130 show a composition bias toward low complexity. Residue Ser-140 is modified to Phosphoserine. Lys-191 is covalently cross-linked (Glycyl lysine isopeptide (Lys-Gly) (interchain with G-Cter in ubiquitin)). Disordered stretches follow at residues Ala-275 to Thr-312 and Tyr-486 to His-523. Position 286 is a phosphoserine (Ser-286). Residues Ser-501 to Ser-519 show a composition bias toward low complexity. Residues Ser-527 and Ser-550 each carry the phosphoserine modification. Glycyl lysine isopeptide (Lys-Gly) (interchain with G-Cter in ubiquitin) cross-links involve residues Lys-577, Lys-651, and Lys-712. The residue at position 775 (Ser-775) is a Phosphoserine. Glycyl lysine isopeptide (Lys-Gly) (interchain with G-Cter in ubiquitin) cross-links involve residues Lys-794, Lys-807, and Lys-1024. Disordered stretches follow at residues Arg-1016–Gln-1065 and Lys-1079–Glu-1117. A compositionally biased stretch (polar residues) spans Ser-1027–Glu-1059. Phosphoserine is present on Ser-1035. Low complexity predominate over residues Ser-1089 to Ser-1098.

The protein belongs to the CSR2 family.

It is found in the cytoplasm. Its function is as follows. May be involved in cell wall organization and biogenesis. This is Protein ECM21 (ECM21) from Saccharomyces cerevisiae (strain ATCC 204508 / S288c) (Baker's yeast).